The following is a 276-amino-acid chain: Prohibitin 1 (276 aa).

Belongs to the prohibitin family.

Functionally, required for larval metabolism or for the progression of the larva into a pupa. This chain is Prohibitin 1, found in Drosophila melanogaster (Fruit fly).